We begin with the raw amino-acid sequence, 1203 residues long: MLDVNNFEYMKIGLASPEKIRSWSYGEVKKPETINYRTLKPEKDGLFCERIFGPQKDWECHCGKYKRVRYKGVVCDRCGVEVTKAKVRRERMGHIELAAPVSHIWYFKGIPSRMGLVLDMSPRALEEVIYFAAYIVTDPGSTPLEKKQLLSEKEFRSYYDKYGNTFKAQMGAEAIRKLLQDIDLEKEVDALREELKSAQGQRRTRAIKRLEVMEAFRNSGNESSWMILDVLPVIPPEIRPMVQLDGGRFATSDLNDLYRRVINRNNRLKRLLDLGAPSIIVQNEKRMLQEAVDALIDNGRRGRPVTGPGNRPLKSLSHMLKGKQGRFRQNLLGKRVDYSGRSVIVVGPHLKMYQCGLPREMALELFKPFIMKELVSRGLAHNIKSAKRKIERVHPDVWDVLEDVIKEHPVLLNRAPTLHRLGIQAFEPTLVDGRAIRLHPLVCTAYNADFDGDQMAVHVPLGAEAQAEARILMLAAQNILNPKDGKPVVTPSQDMVLGNYYLTLERENAIGEGSYFKDTNEALIAYQTGYAHLHTRVAVQASSLNNKTFTEEQNNKLLLTTVGKLIFNEILPDSFPYINEPTQLNLEEKTPENYFVDPGTSIKEEIQSRELVKPFKKGFLGDIIAEVFKRFQITETSKMLDRMKDLGFSYSTKAGMTVGISDIVVLAEKQGILDEAQTKVDKVLKQFRRGLITEEERYDRVIAIWSEAKDVIQDKLMGSLSNRNPIFMMSDSGARGNASNFTQLAGMRGLMADPAGKIIEIPIKSSFREGLTVMEYFISTHGARKGLADTALKTADSGYLTRRLVDVAQDVIIREDDCGTDRGLTVSALEEGSEVIEPLIDRLIGRTSFENVKHPETGEVIVEKNELISEDQAKTIVESGIQEVIIRSAFTCNTKHGVCQKCYGRNLATGSDVEVGEAVGIIAAQSIGEPGTQLTMRTFHTGGVAGDDITQGLPRIQELFEARNPKGQAVITEIDGTVLEFKEVKDKQEIVVQGEVEQRSYAVPYNARMKVSIGDTVEAGQELTEGSVDPKELLQIKGVEGVQDYLLKEVQRVYRMQGVEIGDKHVEVMVRQMLRKIRVVSSGDTEVLPGSLLELHQFKEANHKVLMEEGEPATGRPVLLGITKASLETDSFLSAASFQETTRVLTDAAIKGKRDELLGLKENVIIGKLVPAGTGMPQYRNLESGLDMPESAEESSEEETQTV.

Residues Cys60, Cys62, Cys75, and Cys78 each coordinate Zn(2+). Mg(2+) is bound by residues Asp449, Asp451, and Asp453. Cys818, Cys892, Cys899, and Cys902 together coordinate Zn(2+). Residues 1180-1203 (RNLESGLDMPESAEESSEEETQTV) form a disordered region. The span at 1190 to 1203 (ESAEESSEEETQTV) shows a compositional bias: acidic residues.

It belongs to the RNA polymerase beta' chain family. As to quaternary structure, the RNAP catalytic core consists of 2 alpha, 1 beta, 1 beta' and 1 omega subunit. When a sigma factor is associated with the core the holoenzyme is formed, which can initiate transcription. Requires Mg(2+) as cofactor. Zn(2+) serves as cofactor.

The enzyme catalyses RNA(n) + a ribonucleoside 5'-triphosphate = RNA(n+1) + diphosphate. Its function is as follows. DNA-dependent RNA polymerase catalyzes the transcription of DNA into RNA using the four ribonucleoside triphosphates as substrates. This chain is DNA-directed RNA polymerase subunit beta', found in Oceanobacillus iheyensis (strain DSM 14371 / CIP 107618 / JCM 11309 / KCTC 3954 / HTE831).